The primary structure comprises 328 residues: Sialic acid-binding Ig-like lectin 15 (328 aa).

An N-terminal signal peptide occupies residues 1–19 (MEKSIWLLACLAWVLPTGS). The Extracellular segment spans residues 20-263 (FVRTKIDTTE…RFHGASGAST (244 aa)). Residues 40–158 (PAQRWSMQVP…DVHDRYESRH (119 aa)) enclose the Ig-like V-type domain. 2 disulfides stabilise this stretch: C64–C142 and C95–C104. R143 provides a ligand contact to N-acetylneuraminate. The Ig-like C2-type domain maps to 168–251 (PRIVNISVLP…SLGRSEASVY (84 aa)). The N-linked (GlcNAc...) asparagine glycan is linked to N172. C187 and C237 are oxidised to a cystine. Residues 264-284 (VALLLGALGFKALLLLGVLAA) traverse the membrane as a helical segment. Topologically, residues 285–328 (RAARRRPEHLDTPDTPPRSQAQESNYENLSQMNPRSPPATMCSP) are cytoplasmic. Positions 289–328 (RRPEHLDTPDTPPRSQAQESNYENLSQMNPRSPPATMCSP) are disordered. The span at 301–318 (PRSQAQESNYENLSQMNP) shows a compositional bias: polar residues.

Belongs to the immunoglobulin superfamily. SIGLEC (sialic acid binding Ig-like lectin) family. In terms of assembly, interacts with TYROBP and HCST. As to expression, expressed in macrophage and/or dendritic cells of spleen and lymph nodes.

It localises to the membrane. Functionally, binds sialylated glycoproteins. The protein is Sialic acid-binding Ig-like lectin 15 (SIGLEC15) of Homo sapiens (Human).